Consider the following 529-residue polypeptide: MTDLHPVRRALLSVSDKTGLIELGKSLAERGVELLSTGGTAKALRDAGLTVKDVSEVTGFPEMMDGRVKTLHPMVHGGLLALRDNDAHVAAMTDHGIGEIDLLVVNLYPFEAALKRGAAYDEMIENIDIGGPAMIRAAAKNHAFVNVVVDVEDYGVLLEELDQNDGQTSFAFRQWLAQNAYARTAAYDAAVSNWMAGAIGLDAPRRRAFAGQIAQTLRYGENPHQDAAFYTDGTERVGVATAEQLQGKELSYNNINDTDAAFELVSEFAPEDGPAVAIIKHANPCGVARGATLLEAYNKAFDCDRTSAFGGIVALNMPLDAETAEAITQIFTEVVIAPGASDEAKAIFAAKKNLRLLITEGLPNPQDAGLTTRQVSGGMLVQDKDVGHRAMDDLKVVTEKAPTEEQMADLLFAWKVAKHVKSNAIVYVKDGQTVGVGAGQMSRVDSATIAGVKAQRMADAMELPESLAKGSAVASDAFFPFADGLMEAASNGATCVIQPGGSMRDDEVIKAANDAGLAMVFTGMRHFRH.

An MGS-like domain is found at 2 to 149; it reads TDLHPVRRAL…KNHAFVNVVV (148 aa).

Belongs to the PurH family.

The enzyme catalyses (6R)-10-formyltetrahydrofolate + 5-amino-1-(5-phospho-beta-D-ribosyl)imidazole-4-carboxamide = 5-formamido-1-(5-phospho-D-ribosyl)imidazole-4-carboxamide + (6S)-5,6,7,8-tetrahydrofolate. It catalyses the reaction IMP + H2O = 5-formamido-1-(5-phospho-D-ribosyl)imidazole-4-carboxamide. The protein operates within purine metabolism; IMP biosynthesis via de novo pathway; 5-formamido-1-(5-phospho-D-ribosyl)imidazole-4-carboxamide from 5-amino-1-(5-phospho-D-ribosyl)imidazole-4-carboxamide (10-formyl THF route): step 1/1. It functions in the pathway purine metabolism; IMP biosynthesis via de novo pathway; IMP from 5-formamido-1-(5-phospho-D-ribosyl)imidazole-4-carboxamide: step 1/1. The protein is Bifunctional purine biosynthesis protein PurH of Ruegeria sp. (strain TM1040) (Silicibacter sp.).